The chain runs to 286 residues: Soluble epoxide hydrolase (286 aa).

The AB hydrolase-1 domain occupies Y26–D123. D99 (nucleophile) is an active-site residue. The active-site Proton donor is the Y209. The Proton acceptor role is filled by H264.

This sequence belongs to the AB hydrolase superfamily. Epoxide hydrolase family. Homotetramer.

It localises to the cytoplasm. The protein resides in the cell membrane. It carries out the reaction an epoxide + H2O = an ethanediol. Its function is as follows. Involved in catabolic degradation of epoxides. Shows highest activity towards C6 and C7 carbocyclic epoxides. Also active towards linear 1,2-epoxyalkanes. This Corynebacterium sp. (strain C12) protein is Soluble epoxide hydrolase.